Reading from the N-terminus, the 304-residue chain is MNGIIPLWKERGMTSHDCVYKLRKILHTKKVGHTGTLDPEVEGVLPICIGRATKLAEYVTDEGKVYVAEITLGKSTTTEDATGETVNTKELAEISAAELQAALTKLTGKITQIPPMFSAVKVNGKKLYEYARAGIEVERPSRQVDIYSLIRLDGDTALNQSNPTFQLEIACGKGTYIRTLAVMIGELLGYPAHMSKLERTRSGFFKKEDCLTLTEIDEMMQASDSSFLYPLEKGIESMAKLVIEEEVYAKVLNGGLLPTSLFAEVENEPRAALIFKDKLTAIYKPHPEKKDLWKPEKVIELNQA.

Catalysis depends on Asp38, which acts as the Nucleophile.

The protein belongs to the pseudouridine synthase TruB family. Type 1 subfamily.

The catalysed reaction is uridine(55) in tRNA = pseudouridine(55) in tRNA. Functionally, responsible for synthesis of pseudouridine from uracil-55 in the psi GC loop of transfer RNAs. The protein is tRNA pseudouridine synthase B of Listeria monocytogenes serovar 1/2a (strain ATCC BAA-679 / EGD-e).